A 716-amino-acid polypeptide reads, in one-letter code: Polyribonucleotide nucleotidyltransferase (716 aa).

Mg(2+)-binding residues include D485 and D491. The KH domain occupies 552–611; that stretch reads PRFTTIKIDQDKIKDVIGKGGAVIRELTESTNTNIEIGDDGTIKVAASDQADADAAIEKI. The S1 motif domain maps to 621–689; the sequence is GKIYQGKVAR…RQGRVRLSMK (69 aa). The span at 689–698 shows a compositional bias: basic and acidic residues; sequence KEAAEKKEEP. The interval 689-716 is disordered; it reads KEAAEKKEEPAPEAPAEPAAEEENKSEE. Over residues 707-716 the composition is skewed to acidic residues; the sequence is AAEEENKSEE.

The protein belongs to the polyribonucleotide nucleotidyltransferase family. In terms of assembly, component of the RNA degradosome, which is a multiprotein complex involved in RNA processing and mRNA degradation. Requires Mg(2+) as cofactor.

It localises to the cytoplasm. It catalyses the reaction RNA(n+1) + phosphate = RNA(n) + a ribonucleoside 5'-diphosphate. Functionally, involved in mRNA degradation. Catalyzes the phosphorolysis of single-stranded polyribonucleotides processively in the 3'- to 5'-direction. This is Polyribonucleotide nucleotidyltransferase from Idiomarina loihiensis (strain ATCC BAA-735 / DSM 15497 / L2-TR).